The chain runs to 371 residues: Peptide chain release factor 2 (371 aa).

Q253 is modified (N5-methylglutamine).

Belongs to the prokaryotic/mitochondrial release factor family. In terms of processing, methylated by PrmC. Methylation increases the termination efficiency of RF2.

It localises to the cytoplasm. Its function is as follows. Peptide chain release factor 2 directs the termination of translation in response to the peptide chain termination codons UGA and UAA. The polypeptide is Peptide chain release factor 2 (Mycobacterium marinum (strain ATCC BAA-535 / M)).